Here is a 264-residue protein sequence, read N- to C-terminus: Zinc import ATP-binding protein ZnuC (264 aa).

An ABC transporter domain is found at 11 to 226; the sequence is IELQNIKVVF…PTFIHLFGDQ (216 aa). Residue 43-50 coordinates ATP; the sequence is GPNGGGKS.

This sequence belongs to the ABC transporter superfamily. Zinc importer (TC 3.A.1.15.5) family. As to quaternary structure, the complex is composed of two ATP-binding proteins (ZnuC), two transmembrane proteins (ZnuB) and a solute-binding protein (ZnuA).

It is found in the cell inner membrane. The enzyme catalyses Zn(2+)(out) + ATP(in) + H2O(in) = Zn(2+)(in) + ADP(in) + phosphate(in) + H(+)(in). Its function is as follows. Part of the ABC transporter complex ZnuABC involved in zinc import. Responsible for energy coupling to the transport system. The sequence is that of Zinc import ATP-binding protein ZnuC from Mannheimia succiniciproducens (strain KCTC 0769BP / MBEL55E).